Here is a 579-residue protein sequence, read N- to C-terminus: Vacuolar protein 8 (579 aa).

Residue Gly-2 is the site of N-myristoyl glycine attachment. 3 S-palmitoyl cysteine lipidation sites follow: Cys-4, Cys-5, and Cys-7. ARM repeat units lie at residues 39–76, 77–116, 118–157, 159–198, 200–239, 241–282, 284–323, 325–365, and 409–448; these read NKDQYDFYSGKPLRALTTLVYSDNLNLQRSAALAFAEI, TEKYVSPVSRDVLEPILMLLTNPDPQIRIASCAALGNLAV, NENKLLIVEMGGLEPLIEQMKSDNVEVQCNAVGCITNLAT, DDNKIEIAQSGALVPLTKLARSSNIRVQRNATGALLNMTH, GENRKELVDAGAVPVLVSLLSSMDADVQYYCTTALSNIAV, ESNR…NLAS, TNYQLEIVRAGGLPDLVQLIQSDSLPLVLASVACIRNISI, PLNE…NLAA, and DNTKYDLLQQDVLKVLIPMTMSQDQEISGNSAAAVANLIS. A compositionally biased stretch (polar residues) spans 534–556; sequence QDTNIDHNGNSNNIEGNGRSNKQ. A disordered region spans residues 534-560; sequence QDTNIDHNGNSNNIEGNGRSNKQSSEK.

The protein belongs to the beta-catenin family.

The protein resides in the vacuole membrane. Functionally, functions in both vacuole inheritance and protein targeting from the cytoplasm to vacuole. In Kluyveromyces lactis (strain ATCC 8585 / CBS 2359 / DSM 70799 / NBRC 1267 / NRRL Y-1140 / WM37) (Yeast), this protein is Vacuolar protein 8 (VAC8).